Consider the following 70-residue polypeptide: Prokaryotic ubiquitin-like protein UBact (70 aa).

Basic and acidic residues-rich tracts occupy residues 1 to 15 (MPDQ…RKQG) and 24 to 50 (TRHD…RDPG). The interval 1-70 (MPDQRQQERS…RQQRREQSGE (70 aa)) is disordered. Glu70 is covalently cross-linked (Isoglutamyl lysine isopeptide (Glu-Lys) (interchain with K-? in acceptor proteins)).

This sequence belongs to the ubiquitin-like protein UBact family.

May function as a protein modifier covalently attached to lysine residues of substrate proteins. This may serve to target the modified proteins for degradation by proteasomes. The protein is Prokaryotic ubiquitin-like protein UBact of Terrybacteria sp. (strain RIFCSPHIGHO2_01_FULL_58_15).